Consider the following 255-residue polypeptide: Pimeloyl-[acyl-carrier protein] methyl ester esterase (255 aa).

Residues 16 to 241 (LVLLHGWGMN…QSSHAPFMTE (226 aa)) enclose the AB hydrolase-1 domain. Substrate is bound by residues Trp22, 82–83 (SL), and 143–147 (FMALQ). Catalysis depends on Ser82, which acts as the Nucleophile. Catalysis depends on residues Asp207 and His235. His235 is a substrate binding site.

Belongs to the AB hydrolase superfamily. Carboxylesterase BioH family. In terms of assembly, monomer.

The protein resides in the cytoplasm. The catalysed reaction is 6-carboxyhexanoyl-[ACP] methyl ester + H2O = 6-carboxyhexanoyl-[ACP] + methanol + H(+). It functions in the pathway cofactor biosynthesis; biotin biosynthesis. Functionally, the physiological role of BioH is to remove the methyl group introduced by BioC when the pimeloyl moiety is complete. It allows to synthesize pimeloyl-ACP via the fatty acid synthetic pathway through the hydrolysis of the ester bonds of pimeloyl-ACP esters. This chain is Pimeloyl-[acyl-carrier protein] methyl ester esterase, found in Vibrio parahaemolyticus serotype O3:K6 (strain RIMD 2210633).